The chain runs to 873 residues: Tyrosine-protein kinase transforming protein Fps (873 aa).

The segment at 1-46 (ASGQLHRPQPQEHTSTSAAAGTWRLTQASESRHRLPHCSAAPSHQD) is disordered. The segment covering 11–29 (QEHTSTSAAAGTWRLTQAS) has biased composition (polar residues). The 264-residue stretch at 50-313 (MGFGPELWCP…AVEMIDPATE (264 aa)) folds into the F-BAR domain. The interval 445–471 (GSEEPPPALPLQEDRQSARSTDQERSG) is disordered. A compositionally biased stretch (basic and acidic residues) spans 456–469 (QEDRQSARSTDQER). Residues 511–600 (WYHGAIPRSE…KSGIVLTRAV (90 aa)) form the SH2 domain. Positions 612-865 (VLLGERIGRG…PSFGAVHQDL (254 aa)) constitute a Protein kinase domain. ATP is bound by residues 618 to 626 (IGRGNFGEV) and Lys641. Asp734 serves as the catalytic Proton acceptor. Tyr764 carries the post-translational modification Phosphotyrosine; by autocatalysis.

It belongs to the protein kinase superfamily. Tyr protein kinase family. Fes/fps subfamily.

The enzyme catalyses L-tyrosyl-[protein] + ATP = O-phospho-L-tyrosyl-[protein] + ADP + H(+). The polypeptide is Tyrosine-protein kinase transforming protein Fps (V-FPS) (Gallus gallus (Chicken)).